Reading from the N-terminus, the 165-residue chain is Probable deoxyuridine 5'-triphosphate nucleotidohydrolase (165 aa).

The segment covering Gly-39–Gly-49 has biased composition (basic and acidic residues). A disordered region spans residues Gly-39–Asp-64.

This sequence belongs to the dCTP deaminase family. Archaeal dUTPase subfamily.

It carries out the reaction dUTP + H2O = dUMP + diphosphate + H(+). Its pathway is pyrimidine metabolism; dUMP biosynthesis; dUMP from dCTP (dUTP route): step 2/2. Its function is as follows. This enzyme is involved in nucleotide metabolism: it produces dUMP, the immediate precursor of thymidine nucleotides and it decreases the intracellular concentration of dUTP so that uracil cannot be incorporated into DNA. In Halobacterium salinarum (strain ATCC 29341 / DSM 671 / R1), this protein is Probable deoxyuridine 5'-triphosphate nucleotidohydrolase.